Here is a 316-residue protein sequence, read N- to C-terminus: Succinoglycan biosynthesis protein ExoV (316 aa).

The protein operates within glycan metabolism; exopolysaccharide biosynthesis. The polypeptide is Succinoglycan biosynthesis protein ExoV (exoV) (Rhizobium meliloti (strain 1021) (Ensifer meliloti)).